Here is a 430-residue protein sequence, read N- to C-terminus: mRNA cap guanine-N(7) methyltransferase (430 aa).

The interval 1–88 (MALRPEKPVW…YDLEERKKKQ (88 aa)) is disordered. Residues 15 to 37 (QYDRQYGKLEEPKPPREESKPGD) are compositionally biased toward basic and acidic residues. The mRNA cap 0 methyltransferase domain occupies 136 to 419 (SPIIKLRNFN…FYTVFAFRKV (284 aa)). 145 to 146 (NN) serves as a coordination point for mRNA. K149, G167, D189, D218, Q244, and Y249 together coordinate S-adenosyl-L-methionine.

Belongs to the class I-like SAM-binding methyltransferase superfamily. mRNA cap 0 methyltransferase family.

It localises to the nucleus. It carries out the reaction a 5'-end (5'-triphosphoguanosine)-ribonucleoside in mRNA + S-adenosyl-L-methionine = a 5'-end (N(7)-methyl 5'-triphosphoguanosine)-ribonucleoside in mRNA + S-adenosyl-L-homocysteine. Responsible for methylating the 5'-cap structure of mRNAs. The sequence is that of mRNA cap guanine-N(7) methyltransferase (ABD1) from Eremothecium gossypii (strain ATCC 10895 / CBS 109.51 / FGSC 9923 / NRRL Y-1056) (Yeast).